The sequence spans 72 residues: Translation initiation factor IF-1 (72 aa).

Residues 1 to 72 (MAKEESIKMN…SKGRITYRAR (72 aa)) enclose the S1-like domain.

This sequence belongs to the IF-1 family. Component of the 30S ribosomal translation pre-initiation complex which assembles on the 30S ribosome in the order IF-2 and IF-3, IF-1 and N-formylmethionyl-tRNA(fMet); mRNA recruitment can occur at any time during PIC assembly.

It is found in the cytoplasm. Its function is as follows. One of the essential components for the initiation of protein synthesis. Stabilizes the binding of IF-2 and IF-3 on the 30S subunit to which N-formylmethionyl-tRNA(fMet) subsequently binds. Helps modulate mRNA selection, yielding the 30S pre-initiation complex (PIC). Upon addition of the 50S ribosomal subunit IF-1, IF-2 and IF-3 are released leaving the mature 70S translation initiation complex. In Alkalilimnicola ehrlichii (strain ATCC BAA-1101 / DSM 17681 / MLHE-1), this protein is Translation initiation factor IF-1.